Here is an 896-residue protein sequence, read N- to C-terminus: Alanine--tRNA ligase (896 aa).

Basic and acidic residues predominate over residues 439-456 (QRAKDDAKAKKGQHRDAS). Residues 439-459 (QRAKDDAKAKKGQHRDASAYR) are disordered. Residues His579, His583, Cys681, and His685 each coordinate Zn(2+).

Belongs to the class-II aminoacyl-tRNA synthetase family. Zn(2+) serves as cofactor.

It localises to the cytoplasm. The catalysed reaction is tRNA(Ala) + L-alanine + ATP = L-alanyl-tRNA(Ala) + AMP + diphosphate. Its function is as follows. Catalyzes the attachment of alanine to tRNA(Ala) in a two-step reaction: alanine is first activated by ATP to form Ala-AMP and then transferred to the acceptor end of tRNA(Ala). Also edits incorrectly charged Ser-tRNA(Ala) and Gly-tRNA(Ala) via its editing domain. This Nocardioides sp. (strain ATCC BAA-499 / JS614) protein is Alanine--tRNA ligase.